A 149-amino-acid polypeptide reads, in one-letter code: UPF0260 protein RCAP_rcc02083 (149 aa).

The protein belongs to the UPF0260 family.

The sequence is that of UPF0260 protein RCAP_rcc02083 from Rhodobacter capsulatus (strain ATCC BAA-309 / NBRC 16581 / SB1003).